A 664-amino-acid chain; its full sequence is E3 ubiquitin-protein ligase CHFR (664 aa).

Residues 38-89 (WTIGRRRGCDLSFPSNKLVSGDHCKLTVDEISGEVTLEDTSTNGTVINKLQV) form the FHA domain. Disordered stretches follow at residues 170–220 (LEEP…GRSS) and 245–264 (ESKD…GDGE). The span at 174-202 (QPSTSTSDLLPTASTSSTEPELTSAGQKH) shows a compositional bias: polar residues. The span at 203 to 215 (SSSSGPGNTSISP) shows a compositional bias: low complexity. Basic and acidic residues predominate over residues 245–263 (ESKDHEELEPAKKKMKGDG). The RING-type zinc-finger motif lies at 303–342 (CIICQDLLHDCVSLQPCMHTFCAACYSGWMERSSLCPTCR). The residue at position 385 (T385) is a Phosphothreonine. The disordered stretch occupies residues 389 to 413 (LQPKVRRSFSDEEGSSEDLLELSDV). The segment covering 399 to 413 (DEEGSSEDLLELSDV) has biased composition (acidic residues). The PBZ-type zinc finger occupies 633 to 655 (PDCYWGRNCRTQVKAHHAMKFNH).

It belongs to the CHFR family. In terms of assembly, interacts with HDAC1 and HDAC2. Interacts with PML (with sumoylated form of PML). Poly-ADP-ribosylated. In addition to binding non covalently poly(ADP-ribose) via its PBZ-type zinc finger, the protein is also covalently poly-ADP-ribosylated by PARP1. Post-translationally, autoubiquitinated; may regulate its cellular level. In terms of processing, phosphorylated by PKB. Phosphorylation may affect its E3 ligase activity.

Its subcellular location is the nucleus. It is found in the PML body. It catalyses the reaction S-ubiquitinyl-[E2 ubiquitin-conjugating enzyme]-L-cysteine + [acceptor protein]-L-lysine = [E2 ubiquitin-conjugating enzyme]-L-cysteine + N(6)-ubiquitinyl-[acceptor protein]-L-lysine.. It participates in protein modification; protein ubiquitination. In terms of biological role, E3 ubiquitin-protein ligase that functions in the antephase checkpoint by actively delaying passage into mitosis in response to microtubule poisons. Acts in early prophase before chromosome condensation, when the centrosome move apart from each other along the periphery of the nucleus. Probably involved in signaling the presence of mitotic stress caused by microtubule poisons by mediating the 'Lys-48'-linked ubiquitination of target proteins, leading to their degradation by the proteasome. Promotes the ubiquitination and subsequent degradation of AURKA and PLK1. Probably acts as a tumor suppressor, possibly by mediating the polyubiquitination of HDAC1, leading to its degradation. May also promote the formation of 'Lys-63'-linked polyubiquitin chains and functions with the specific ubiquitin-conjugating UBC13-MMS2 (UBE2N-UBE2V2) heterodimer. Substrates that are polyubiquitinated at 'Lys-63' are usually not targeted for degradation, but are rather involved in signaling cellular stress. This is E3 ubiquitin-protein ligase CHFR (Chfr) from Mus musculus (Mouse).